A 250-amino-acid polypeptide reads, in one-letter code: Deoxynucleoside-5'-monophosphate kinase (250 aa).

ATP-binding residues include G14, D16, and T17. The dGMP site is built by V44, K65, R130, G137, T138, W150, D170, R172, E176, and S210.

It belongs to the dNMP kinase family. As to quaternary structure, monomer.

It catalyses the reaction a 2'-deoxyribonucleoside 5'-phosphate + ATP = a 2'-deoxyribonucleoside 5'-diphosphate + ADP. Functionally, allows the synthesis of deoxyribonucleoside triphosphates necessary for the rapid viral DNA replication. Phosphorylates all four dNMPs. The enzyme had the highest activity with dAMP and had about 30% less activity with dTMP and dGMP, respectively. The lowest activity was observed with dCMP as the substrate (about 35% of that with dAMP). The polypeptide is Deoxynucleoside-5'-monophosphate kinase (Escherichia coli (Enterobacteria phage T5)).